The primary structure comprises 70 residues: Putative membrane protein insertion efficiency factor (70 aa).

Belongs to the UPF0161 family.

It is found in the cell membrane. Its function is as follows. Could be involved in insertion of integral membrane proteins into the membrane. The sequence is that of Putative membrane protein insertion efficiency factor from Moorella thermoacetica (strain ATCC 39073 / JCM 9320).